Consider the following 209-residue polypeptide: Small ribosomal subunit protein uS4 (209 aa).

Positions 98 to 158 (SRVDNIVYRL…EKSRSLAAIK (61 aa)) constitute an S4 RNA-binding domain.

Belongs to the universal ribosomal protein uS4 family. In terms of assembly, part of the 30S ribosomal subunit. Contacts protein S5. The interaction surface between S4 and S5 is involved in control of translational fidelity.

Functionally, one of the primary rRNA binding proteins, it binds directly to 16S rRNA where it nucleates assembly of the body of the 30S subunit. In terms of biological role, with S5 and S12 plays an important role in translational accuracy. The chain is Small ribosomal subunit protein uS4 from Pseudothermotoga lettingae (strain ATCC BAA-301 / DSM 14385 / NBRC 107922 / TMO) (Thermotoga lettingae).